A 275-amino-acid chain; its full sequence is UPF0758 protein RL2068 (275 aa).

The disordered stretch occupies residues 1-45 (MAKGPVSTSSDDELPFETQEPIAADERSFFGGQPQKPSAPNARAA). The MPN domain occupies 153 to 275 (VLSSWSSVIQ…HVSLKGLKLI (123 aa)). Zn(2+) contacts are provided by His224, His226, and Asp237. A JAMM motif motif is present at residues 224–237 (HNHPSGDPTPSRAD).

The protein belongs to the UPF0758 family.

The protein is UPF0758 protein RL2068 of Rhizobium johnstonii (strain DSM 114642 / LMG 32736 / 3841) (Rhizobium leguminosarum bv. viciae).